We begin with the raw amino-acid sequence, 203 residues long: dATP triphosphohydrolase (203 aa).

R17 serves as a coordination point for dATP. The Co(2+) site is built by H31, H73, D74, E77, D82, and D130.

It belongs to the Caudovirales dATP triphosphohydrolase family. Co(2+) is required as a cofactor.

The enzyme catalyses dATP + H2O = 2'-deoxyadenosine + triphosphate + H(+). It catalyses the reaction dADP + H2O = 2'-deoxyadenosine + diphosphate. It carries out the reaction dAMP + H2O = 2'-deoxyadenosine + phosphate. Its function is as follows. Catalyzes the hydrolysis of dATP, dADP and dAMP into dA. This step is essential for Z-genome synthesis (containing aminoadenine instead of adenine). Specifically removes dATP and its precursor dADP from the nucleotide pool of the host, preventing the incorporation of A into the phage genome and favoring the integration of the Z-base into the viral genome. In Acinetobacter phage SH-Ab 15497, this protein is dATP triphosphohydrolase (datZ).